Reading from the N-terminus, the 329-residue chain is tRNA(Ile)-lysidine synthase, chloroplastic (329 aa).

32–37 (SGGQDS) contributes to the ATP binding site.

This sequence belongs to the tRNA(Ile)-lysidine synthase family.

The protein localises to the plastid. It localises to the chloroplast. It catalyses the reaction cytidine(34) in tRNA(Ile2) + L-lysine + ATP = lysidine(34) in tRNA(Ile2) + AMP + diphosphate + H(+). Its function is as follows. Ligates lysine onto the cytidine present at position 34 of the AUA codon-specific tRNA(Ile) that contains the anticodon CAU, in an ATP-dependent manner. Cytidine is converted to lysidine, thus changing the amino acid specificity of the tRNA from methionine to isoleucine. This chain is tRNA(Ile)-lysidine synthase, chloroplastic, found in Pyropia yezoensis (Susabi-nori).